We begin with the raw amino-acid sequence, 190 residues long: Pyridoxal 5'-phosphate synthase subunit PdxT (190 aa).

46–48 is an L-glutamine binding site; sequence GES. Cys78 serves as the catalytic Nucleophile. L-glutamine is bound by residues Arg108 and 137 to 138; that span reads IR. Residues His174 and Glu176 each act as charge relay system in the active site.

This sequence belongs to the glutaminase PdxT/SNO family. As to quaternary structure, in the presence of PdxS, forms a dodecamer of heterodimers. Only shows activity in the heterodimer.

The enzyme catalyses aldehydo-D-ribose 5-phosphate + D-glyceraldehyde 3-phosphate + L-glutamine = pyridoxal 5'-phosphate + L-glutamate + phosphate + 3 H2O + H(+). It carries out the reaction L-glutamine + H2O = L-glutamate + NH4(+). It functions in the pathway cofactor biosynthesis; pyridoxal 5'-phosphate biosynthesis. Functionally, catalyzes the hydrolysis of glutamine to glutamate and ammonia as part of the biosynthesis of pyridoxal 5'-phosphate. The resulting ammonia molecule is channeled to the active site of PdxS. This Chloroflexus aggregans (strain MD-66 / DSM 9485) protein is Pyridoxal 5'-phosphate synthase subunit PdxT.